Consider the following 400-residue polypeptide: Probable phospho-2-dehydro-3-deoxyheptonate aldolase (400 aa).

This sequence belongs to the class-II DAHP synthase family.

The catalysed reaction is D-erythrose 4-phosphate + phosphoenolpyruvate + H2O = 7-phospho-2-dehydro-3-deoxy-D-arabino-heptonate + phosphate. It participates in antibiotic biosynthesis; phenazine biosynthesis. The chain is Probable phospho-2-dehydro-3-deoxyheptonate aldolase (phzC) from Pseudomonas fluorescens.